The sequence spans 198 residues: Superoxide dismutase [Fe] (198 aa).

Positions 27, 74, 157, and 161 each coordinate Fe(3+).

The protein belongs to the iron/manganese superoxide dismutase family. As to quaternary structure, homodimer. Fe(3+) serves as cofactor.

It catalyses the reaction 2 superoxide + 2 H(+) = H2O2 + O2. In terms of biological role, destroys superoxide anion radicals which are normally produced within the cells and which are toxic to biological systems. This Pseudomonas putida (Arthrobacter siderocapsulatus) protein is Superoxide dismutase [Fe] (sodB).